Reading from the N-terminus, the 264-residue chain is Chanoclavine-I dehydrogenase easD (264 aa).

The N-terminal stretch at 1–20 (MASVSSKIFAITGGASGIGA) is a signal peptide. NADP(+) is bound by residues Ile18, Asp66, Arg132, Tyr169, Lys173, and Thr204. The active-site Proton donor is Tyr169. The Lowers pKa of active site Tyr role is filled by Lys173.

The protein belongs to the short-chain dehydrogenases/reductases (SDR) family. As to quaternary structure, homotetramer.

The catalysed reaction is chanoclavine-I + NAD(+) = chanoclavine-I aldehyde + NADH + H(+). The protein operates within alkaloid biosynthesis; ergot alkaloid biosynthesis. Its function is as follows. Chanoclavine-I dehydrogenase; part of the gene cluster that mediates the biosynthesis of fungal ergot alkaloid. DmaW catalyzes the first step of ergot alkaloid biosynthesis by condensing dimethylallyl diphosphate (DMAP) and tryptophan to form 4-dimethylallyl-L-tryptophan. The second step is catalyzed by the methyltransferase easF that methylates 4-dimethylallyl-L-tryptophan in the presence of S-adenosyl-L-methionine, resulting in the formation of 4-dimethylallyl-L-abrine. The catalase easC and the FAD-dependent oxidoreductase easE then transform 4-dimethylallyl-L-abrine to chanoclavine-I which is further oxidized by easD in the presence of NAD(+), resulting in the formation of chanoclavine-I aldehyde. Chanoclavine-I aldehyde is the precursor of ergoamides and ergopeptines in Clavicipitaceae, and clavine-type alcaloids such as fumiclavine in Trichocomaceae. However, the metabolites downstream of chanoclavine-I aldehyde in Arthrodermataceae have not been identified yet. The sequence is that of Chanoclavine-I dehydrogenase easD from Arthroderma otae (strain ATCC MYA-4605 / CBS 113480) (Microsporum canis).